Consider the following 394-residue polypeptide: ATP-dependent RNA helicase fal1 (394 aa).

A Q motif motif is present at residues 21-49 (SSFEEMNLKEDLLRGIYAYGYETPSAVQS). The region spanning 52–222 (IIQICKGRDV…NKFTTNPVRI (171 aa)) is the Helicase ATP-binding domain. 65–72 (AQSGTGKT) is a binding site for ATP. Ser-67 is modified (phosphoserine). The DEAD box signature appears at 170-173 (DEAD). The 162-residue stretch at 233 to 394 (GLKQYFIAVE…EMPMNIGDMV (162 aa)) folds into the Helicase C-terminal domain.

This sequence belongs to the DEAD box helicase family. DDX48/FAL1 subfamily.

The protein resides in the nucleus. Its subcellular location is the nucleolus. It catalyses the reaction ATP + H2O = ADP + phosphate + H(+). Functionally, ATP-dependent RNA helicase involved in 40S ribosomal subunit biogenesis. Required for the processing and cleavage of 35S pre-rRNA at sites A0, A1, and A2, leading to mature 18S rRNA. The protein is ATP-dependent RNA helicase fal1 (tif412) of Schizosaccharomyces pombe (strain 972 / ATCC 24843) (Fission yeast).